Here is a 317-residue protein sequence, read N- to C-terminus: E3 ubiquitin-protein ligase NRDP1 (317 aa).

An RING-type; degenerate zinc finger spans residues C18–R57. Residues I135–A175 are a coiled coil.

The enzyme catalyses S-ubiquitinyl-[E2 ubiquitin-conjugating enzyme]-L-cysteine + [acceptor protein]-L-lysine = [E2 ubiquitin-conjugating enzyme]-L-cysteine + N(6)-ubiquitinyl-[acceptor protein]-L-lysine.. It functions in the pathway protein modification; protein ubiquitination. Its function is as follows. Acts as E3 ubiquitin-protein ligase and regulates the degradation of target proteins. This chain is E3 ubiquitin-protein ligase NRDP1 (rnf41), found in Xenopus laevis (African clawed frog).